The chain runs to 575 residues: Dihydroxy-acid dehydratase (575 aa).

The interval 1-27 (MSNQERQERPEKDPDLRSTEVTEGYEK) is disordered. Cys61 serves as a coordination point for [2Fe-2S] cluster. Asp93 is a binding site for Mg(2+). Cys134 is a [2Fe-2S] cluster binding site. Mg(2+) contacts are provided by Asp135 and Lys136. Lys136 carries the N6-carboxylysine modification. Cys206 serves as a coordination point for [2Fe-2S] cluster. Glu460 serves as a coordination point for Mg(2+). The Proton acceptor role is filled by Ser486.

It belongs to the IlvD/Edd family. As to quaternary structure, homodimer. It depends on [2Fe-2S] cluster as a cofactor. The cofactor is Mg(2+).

It carries out the reaction (2R)-2,3-dihydroxy-3-methylbutanoate = 3-methyl-2-oxobutanoate + H2O. The enzyme catalyses (2R,3R)-2,3-dihydroxy-3-methylpentanoate = (S)-3-methyl-2-oxopentanoate + H2O. It participates in amino-acid biosynthesis; L-isoleucine biosynthesis; L-isoleucine from 2-oxobutanoate: step 3/4. It functions in the pathway amino-acid biosynthesis; L-valine biosynthesis; L-valine from pyruvate: step 3/4. Functionally, functions in the biosynthesis of branched-chain amino acids. Catalyzes the dehydration of (2R,3R)-2,3-dihydroxy-3-methylpentanoate (2,3-dihydroxy-3-methylvalerate) into 2-oxo-3-methylpentanoate (2-oxo-3-methylvalerate) and of (2R)-2,3-dihydroxy-3-methylbutanoate (2,3-dihydroxyisovalerate) into 2-oxo-3-methylbutanoate (2-oxoisovalerate), the penultimate precursor to L-isoleucine and L-valine, respectively. The protein is Dihydroxy-acid dehydratase of Haloarcula marismortui (strain ATCC 43049 / DSM 3752 / JCM 8966 / VKM B-1809) (Halobacterium marismortui).